Consider the following 269-residue polypeptide: tRNA (guanine-N(7)-)-methyltransferase (269 aa).

Residues 1–38 (MDGVNDAANHTVESVPGRPSTASAPLEAGRRSPTGSRL) form a disordered region. 4 residues coordinate S-adenosyl-L-methionine: Glu91, Glu116, Asp143, and Asp166. Asp166 is a catalytic residue. Substrate is bound by residues Lys170, Asp202, and 247–250 (TKFE).

It belongs to the class I-like SAM-binding methyltransferase superfamily. TrmB family.

It carries out the reaction guanosine(46) in tRNA + S-adenosyl-L-methionine = N(7)-methylguanosine(46) in tRNA + S-adenosyl-L-homocysteine. The protein operates within tRNA modification; N(7)-methylguanine-tRNA biosynthesis. Its function is as follows. Catalyzes the formation of N(7)-methylguanine at position 46 (m7G46) in tRNA. This is tRNA (guanine-N(7)-)-methyltransferase from Nocardia farcinica (strain IFM 10152).